A 292-amino-acid polypeptide reads, in one-letter code: Zinc metalloproteinase nas-3 (292 aa).

An N-terminal signal peptide occupies residues 1-16 (MYRFIIFFSLLALTAS). A Peptidase M12A domain is found at 56-249 (RGIAIHPWQW…RNINTLYKCN (194 aa)). Disulfide bonds link Cys-103–Cys-248 and Cys-128–Cys-158. His-169 is a Zn(2+) binding site. Glu-170 is an active-site residue. Zn(2+)-binding residues include His-173 and His-179.

The cofactor is Zn(2+).

Its subcellular location is the secreted. In terms of biological role, metalloprotease. In Caenorhabditis elegans, this protein is Zinc metalloproteinase nas-3 (nas-3).